The sequence spans 234 residues: Orotidine 5'-phosphate decarboxylase (234 aa).

Residues Asp-11, Lys-33, 60–69 (DLKFHDIPNT), Thr-120, Arg-181, Gln-190, Gly-210, and Arg-211 each bind substrate. Lys-62 functions as the Proton donor in the catalytic mechanism.

It belongs to the OMP decarboxylase family. Type 1 subfamily. Homodimer.

It carries out the reaction orotidine 5'-phosphate + H(+) = UMP + CO2. It participates in pyrimidine metabolism; UMP biosynthesis via de novo pathway; UMP from orotate: step 2/2. Functionally, catalyzes the decarboxylation of orotidine 5'-monophosphate (OMP) to uridine 5'-monophosphate (UMP). This is Orotidine 5'-phosphate decarboxylase from Aliivibrio salmonicida (strain LFI1238) (Vibrio salmonicida (strain LFI1238)).